A 314-amino-acid chain; its full sequence is MVKLLVAKILCMVGVFFFMLLGSLLPVKIIETDFEKAHRSKKILSLCNTFGGGVFLATCFNALLPAVREKLQKVLSLGHISTDYPLAETILLLGFFMTVFLEQLILTFRKEKPSFIDLETFNAGSDVGSDSEYESPFMGGARGHALYVEPHGHGPSLSVQGLSRASPVRLLSLAFALSAHSVFEGLALGLQEEGEKVVSLFVGVAVHETLVAVALGISMARSAMPLRDAAKLAVTVSAMIPLGIGLGLGIESAQGVPGSVASVLLQGLAGGTFLFITFLEILAKELEEKSDRLLKVLFLVLGYTVLAGMVFLKW.

Topologically, residues Met1–Lys3 are extracellular. The helical transmembrane segment at Leu4–Leu24 threads the bilayer. The Cytoplasmic portion of the chain corresponds to Leu25–Lys42. The chain crosses the membrane as a helical span at residues Ile43–Leu63. Topologically, residues Leu64–Pro85 are extracellular. The helical transmembrane segment at Leu86 to Leu106 threads the bilayer. Residues Thr107–Arg169 lie on the Cytoplasmic side of the membrane. Ser125 and Ser129 each carry phosphoserine. The chain crosses the membrane as a helical span at residues Leu170–Leu190. Residues Gln191–Lys196 lie on the Extracellular side of the membrane. The helical transmembrane segment at Val197–Ile217 threads the bilayer. Topologically, residues Ser218–Ala229 are cytoplasmic. Residues Ala230–Ile250 traverse the membrane as a helical segment. Residues Glu251–Ser262 lie on the Extracellular side of the membrane. The chain crosses the membrane as a helical span at residues Val263–Ala283. The Cytoplasmic portion of the chain corresponds to Lys284–Arg292. The chain crosses the membrane as a helical span at residues Leu293–Lys313. Residue Trp314 is a topological domain, extracellular.

The protein belongs to the ZIP transporter (TC 2.A.5) family.

Its subcellular location is the cell membrane. It is found in the apical cell membrane. It carries out the reaction Zn(2+)(in) = Zn(2+)(out). Its function is as follows. Transporter for the divalent cation Zn(2+). Mediates the influx of Zn(2+) into cells from extracellular space. Controls Zn(2+) accumulation into dentate gyrus granule cells in the hippocampus. Mediates Zn(2+) reuptake from the secreted milk within the alveolar lumen. This is Zinc transporter ZIP3 from Homo sapiens (Human).